A 504-amino-acid chain; its full sequence is Cytochrome P450 2D10 (504 aa).

Ser-382 carries O-linked (GlcNAc) serine glycosylation. Heme is bound at residue Cys-446.

It belongs to the cytochrome P450 family. Heme serves as cofactor.

It localises to the endoplasmic reticulum membrane. The protein localises to the microsome membrane. The catalysed reaction is an organic molecule + reduced [NADPH--hemoprotein reductase] + O2 = an alcohol + oxidized [NADPH--hemoprotein reductase] + H2O + H(+). Functionally, cytochromes P450 are a group of heme-thiolate monooxygenases. In liver microsomes, this enzyme is involved in an NADPH-dependent electron transport pathway. It oxidizes a variety of structurally unrelated compounds, including steroids, fatty acids, and xenobiotics. The chain is Cytochrome P450 2D10 (Cyp2d10) from Rattus norvegicus (Rat).